We begin with the raw amino-acid sequence, 310 residues long: 3,5-dioxohexanoate:acetyl-CoA acetone transferase (310 aa).

The Zn(2+) site is built by His-49, His-51, and Glu-258.

It belongs to the BKACE family. Zn(2+) is required as a cofactor.

It catalyses the reaction 3,5-dioxohexanoate + acetyl-CoA = acetoacetyl-CoA + acetoacetate. Its function is as follows. Catalyzes the condensation of 3,5-dioxohexanoate and acetyl-CoA, forming acetoacetate and acetoacetyl-CoA. May be involved in fatty acid biosynthesis rescue via triacetic acid lactone. This is 3,5-dioxohexanoate:acetyl-CoA acetone transferase from Paraburkholderia graminis (strain ATCC 700544 / DSM 17151 / LMG 18924 / NCIMB 13744 / C4D1M).